The chain runs to 969 residues: Levansucrase (969 aa).

Residues 1–52 form the signal peptide; that stretch reads MDITVNSQSNTVAPKQAECKKMRYSIRKVATVGATSALVGTLAFLGATQVKA. Over residues 89–103 the composition is skewed to low complexity; that stretch reads SEAVESSVAHSEVAT. A disordered region spans residues 89–169; that stretch reads SEAVESSVAH…STASSEAADT (81 aa). Over residues 106 to 116 the composition is skewed to polar residues; it reads VTETQPSNTTP. The segment covering 124-166 has biased composition (low complexity); the sequence is SSTVVTSSSDATTPSATVAAVSAPAHTSEAAVEAPTSTASSEA. Sucrose is bound by residues Trp-286, Asp-287, and Ser-356. Asp-287 acts as the Nucleophile in catalysis. Residue Asp-443 coordinates Ca(2+). 2 residues coordinate sucrose: Arg-448 and Asp-449. Ca(2+) contacts are provided by Gln-473, Asn-512, and Asp-544. Glu-545 serves as a coordination point for sucrose. Catalysis depends on Glu-547, which acts as the Proton donor/acceptor. Arg-565 serves as a coordination point for sucrose. 2 disordered regions span residues 746–843 and 860–934; these read VKDG…VGDR and IVAT…SEGS. Residues 747-758 are compositionally biased toward basic and acidic residues; that stretch reads KDGKDKKADKPE. Residues 776–789 show a composition bias toward polar residues; the sequence is KPGTSKPADNNQPS. Basic and acidic residues predominate over residues 872–910; that stretch reads VKEESVTETEAPKPVKSEEKVQSHGVDKANEVTKSDESS. The span at 924–934 shows a compositional bias: polar residues; that stretch reads TPKTPSDSEGS. The helical transmembrane segment at 938–958 threads the bilayer; it reads ILSILATIFAAIASLALLGYG.

Belongs to the glycosyl hydrolase 68 family.

The protein localises to the cell membrane. It localises to the cell surface. It carries out the reaction [6)-beta-D-fructofuranosyl-(2-&gt;](n) alpha-D-glucopyranoside + sucrose = [6)-beta-D-fructofuranosyl-(2-&gt;](n+1) alpha-D-glucopyranoside + D-glucose. With respect to regulation, ca(2+) may play an important structural role and promote stability of levansucrase. In terms of biological role, catalyzes the synthesis of levan, a fructose polymer, by transferring the fructosyl moiety from sucrose to a growing acceptor molecule. Also displays sucrose hydrolase activity. The sequence is that of Levansucrase from Streptococcus salivarius.